The sequence spans 554 residues: Carboxylesterase 1C (554 aa).

The first 18 residues, 1-18 (MWLHALVWASLAVCPILG), serve as a signal peptide directing secretion. Asparagine 79 carries N-linked (GlcNAc...) asparagine glycosylation. A disulfide bridge connects residues cysteine 87 and cysteine 116. Serine 221 serves as the catalytic Acyl-ester intermediate. Cysteines 273 and 284 form a disulfide. 2 N-linked (GlcNAc...) asparagine glycosylation sites follow: asparagine 274 and asparagine 304. The active-site Charge relay system is glutamate 342. Asparagine 377 carries an N-linked (GlcNAc...) asparagine glycan. Residue histidine 455 is the Charge relay system of the active site. Serine 473 carries the phosphoserine modification. An N-linked (GlcNAc...) asparagine glycan is attached at asparagine 478. The Prevents secretion from ER motif lies at 551–554 (TEHK).

It belongs to the type-B carboxylesterase/lipase family. As to expression, expressed in lung, kidney and liver.

Its subcellular location is the endoplasmic reticulum lumen. It carries out the reaction a carboxylic ester + H2O = an alcohol + a carboxylate + H(+). Involved in the detoxification of xenobiotics and in the activation of ester and amide prodrugs. Involved in the extracellular metabolism of lung surfactant. The protein is Carboxylesterase 1C (Ces1c) of Mus musculus (Mouse).